The primary structure comprises 259 residues: Type III pantothenate kinase (259 aa).

9-16 (DAGNSRIK) contributes to the ATP binding site. Residues Tyr93 and 100–103 (GSDR) each bind substrate. Residue Asp102 is the Proton acceptor of the active site. Position 126 (Thr126) interacts with ATP. Substrate is bound at residue Thr190.

It belongs to the type III pantothenate kinase family. In terms of assembly, homodimer. The cofactor is NH4(+). K(+) is required as a cofactor.

It localises to the cytoplasm. It catalyses the reaction (R)-pantothenate + ATP = (R)-4'-phosphopantothenate + ADP + H(+). The protein operates within cofactor biosynthesis; coenzyme A biosynthesis; CoA from (R)-pantothenate: step 1/5. Functionally, catalyzes the phosphorylation of pantothenate (Pan), the first step in CoA biosynthesis. The protein is Type III pantothenate kinase of Burkholderia thailandensis (strain ATCC 700388 / DSM 13276 / CCUG 48851 / CIP 106301 / E264).